Consider the following 373-residue polypeptide: ORC1-type DNA replication protein 2 (373 aa).

ATP contacts are provided by residues 63–67 (TGKTS), Tyr-205, and Arg-217.

It belongs to the CDC6/cdc18 family.

Involved in regulation of DNA replication. The chain is ORC1-type DNA replication protein 2 (cdc6-2) from Methanosarcina mazei (strain ATCC BAA-159 / DSM 3647 / Goe1 / Go1 / JCM 11833 / OCM 88) (Methanosarcina frisia).